Here is a 424-residue protein sequence, read N- to C-terminus: Gamma-glutamyl phosphate reductase (424 aa).

This sequence belongs to the gamma-glutamyl phosphate reductase family.

The protein localises to the cytoplasm. It carries out the reaction L-glutamate 5-semialdehyde + phosphate + NADP(+) = L-glutamyl 5-phosphate + NADPH + H(+). It functions in the pathway amino-acid biosynthesis; L-proline biosynthesis; L-glutamate 5-semialdehyde from L-glutamate: step 2/2. Catalyzes the NADPH-dependent reduction of L-glutamate 5-phosphate into L-glutamate 5-semialdehyde and phosphate. The product spontaneously undergoes cyclization to form 1-pyrroline-5-carboxylate. The sequence is that of Gamma-glutamyl phosphate reductase from Parvibaculum lavamentivorans (strain DS-1 / DSM 13023 / NCIMB 13966).